The chain runs to 562 residues: Protein KASH5 (562 aa).

The Cytoplasmic segment spans residues 1 to 521 (MDLPEGPVGG…PQRLRVTRHP (521 aa)). A disordered region spans residues 125-153 (ALTSRQLPSGCPEAEEPANLESFGGEDPR). Residues 164 to 349 (SSLEDLELSN…LEEQLSQTYE (186 aa)) adopt a coiled-coil conformation. The segment at 407–481 (ETSEETEFPS…DIPENPPERP (75 aa)) is disordered. Residues 431 to 448 (AHPEEGRKEPSMWLTRRE) are compositionally biased toward basic and acidic residues. The chain crosses the membrane as a helical; Anchor for type IV membrane protein span at residues 522-542 (LIPAPVLGLLLLLLLSVLLLG). The interaction with SUN1 stretch occupies residues 541 to 562 (LGPSPPPTWPHLQLCYLQPPPV). Topologically, residues 543 to 562 (PSPPPTWPHLQLCYLQPPPV) are perinuclear space.

As to quaternary structure, core component the LINC complex which is composed of inner nuclear membrane SUN domain-containing proteins coupled to outer nuclear membrane KASH domain-containing nesprins. SUN and KASH domain-containing proteins seem to bind each other promiscuously; however, differentially expression of LINC complex constituents is giving rise to specific assemblies. At least SUN1/2-containing core LINC complexes are proposed to be hexameric composed of three protomers of each KASH and SUN domain-containing protein. Interacts with SUN1; this interaction mediates its telomere localization by forming a SUN1:KASH5 LINC complex. Component of a probable SUN2:KASH5 LINC complex. Self-associates. Interacts with DYNC1H1, DCTN1, DYNC1I1/2 and PAFAH1B1; suggesting the association with the dynein-dynactin motor complex. In terms of tissue distribution, expressed in testis (at protein level).

It is found in the nucleus outer membrane. The protein resides in the nucleus. Its subcellular location is the chromosome. The protein localises to the telomere. It localises to the nucleus envelope. Its function is as follows. As a component of the LINC (LInker of Nucleoskeleton and Cytoskeleton) complex, involved in the connection between the nuclear lamina and the cytoskeleton. The nucleocytoplasmic interactions established by the LINC complex play an important role in the transmission of mechanical forces across the nuclear envelope and in nuclear movement and positioning. Required for telomere attachment to nuclear envelope in the prophase of meiosis. Required for rapid telomere prophase movements implicating a SUN1/2:KASH5 LINC complex in which SUN1 and SUN2 seem to act at least partial redundantly. Required for homolog pairing during meiotic prophase in spermatocytes and probably oocytes. Essential for male and female gametogenesis. Recruits cytoplasmic dynein to telomere attachment sites at the nuclear envelope in spermatocytes. In oocytes is involved in meiotic resumption and spindle formation. The sequence is that of Protein KASH5 from Homo sapiens (Human).